Consider the following 9518-residue polypeptide: Nonribosomal peptide synthetase ungA' (9518 aa).

An adenylation 1 region spans residues 214-611 (ERARETPNAP…ARKDDQVKVR (398 aa)). The Carrier 1 domain maps to 738 to 814 (APRTEMEWRL…DLAEVARLEQ (77 aa)). Position 775 is an O-(pantetheine 4'-phosphoryl)serine (Ser775). A condensation 1 region spans residues 853-1250 (DLLPCSPLQE…EEVLRQISRE (398 aa)). The adenylation 2 stretch occupies residues 1292–1695 (QRVQEQPDRP…GRKDTQVKIR (404 aa)). Positions 1822-1898 (LPQTELERRL…RLAHCSQTEQ (77 aa)) constitute a Carrier 2 domain. Ser1859 is subject to O-(pantetheine 4'-phosphoryl)serine. The epimerization 1 stretch occupies residues 1911 to 2336 (TFALSPIQQL…QRSLEVVAKE (426 aa)). A condensation 2 region spans residues 2376-2803 (EDIYPCSPVQ…DNLQIASSQD (428 aa)). The interval 2829-3224 (RIQQQPEAPA…NRKDNQVKIR (396 aa)) is adenylation 3. The Carrier 3 domain maps to 3352–3428 (APATASEQRL…DMAQTLKVES (77 aa)). O-(pantetheine 4'-phosphoryl)serine is present on Ser3389. The condensation 3 stretch occupies residues 3465–3869 (EDVLPCTPLQ…QVCKEASQYL (405 aa)). An adenylation 4 region spans residues 3906–4307 (QQAHQRPNAS…GRRDAQVKIR (402 aa)). Residues 4436-4512 (TPTTITECRI…RLAACTTPVD (77 aa)) enclose the Carrier 4 domain. An O-(pantetheine 4'-phosphoryl)serine modification is found at Ser4473. The tract at residues 4527 to 4954 (ALSPIQQLFV…EDAAQELPSL (428 aa)) is epimerization 2. The condensation 4 stretch occupies residues 4990 to 5411 (VEDIYPCSPI…ANLISKEDLR (422 aa)). The segment at 5433 to 5829 (SEQAQNQPDA…GRKDGQVKIR (397 aa)) is adenylation 5. Positions 5957 to 6033 (VASSPVELAL…QLAKNSGLQA (77 aa)) constitute a Carrier 5 domain. An O-(pantetheine 4'-phosphoryl)serine modification is found at Ser5994. The segment at 6050-6470 (ELSPIQRMFF…CEHSLVMAAH (421 aa)) is epimerization 3. The interval 6512–6856 (VEDIYPCTPI…TGISVQNNAS (345 aa)) is condensation 5. Residues 6947–7338 (LRPNSSAIHA…GRKDSQVKVR (392 aa)) form an adenylation 6 region. The Carrier 6 domain maps to 7464–7540 (LPRTEVEMQL…GLAPSAASQA (77 aa)). Ser7501 is subject to O-(pantetheine 4'-phosphoryl)serine. The tract at residues 7555–7978 (ELSPIQQMFI…LQTAARELPH (424 aa)) is epimerization 4. A condensation 6 region spans residues 8016-8444 (VEDIYPLTPI…QVDLAGRHDQ (429 aa)). An adenylation 7 region spans residues 8468–8867 (MQCQQRPDAT…SRKDAQVKIR (400 aa)). The region spanning 8995–9071 (PLTTEMEWRL…DMAHYLREGQ (77 aa)) is the Carrier 7 domain. At Ser9032 the chain carries O-(pantetheine 4'-phosphoryl)serine. A condensation 7 region spans residues 9111–9454 (DVYPTTELQD…DNLEHDAGTS (344 aa)).

It belongs to the NRP synthetase family.

It participates in secondary metabolite biosynthesis. Nonribosomal peptide synthetase; part of the gene cluster that mediates the biosynthesis of the unguisins, gamma-aminobutyric acid (GABA)-containing fungal cyclic heptapeptides with the amino acid sequence cyclo-(D-Ala1-D-Val2-L-Leu3-beta-MePhe4-D-Ala5-D-Trp6-GABA7) for unguisin H and cyclo-(D-Ala1-D-Ala2-L-Leu3-beta-MePhe4-D-Ala5-D-Trp6-GABA7) for unguisin I. UngA' is the main enzyme within the cluster which condenses the 7 residues using its respective 7 modules. The terminal condensation domain (Ct) is involved in cyclization with D-alanine and thereby releasing of unguisins H and I. The alanine racemase ungC' provides D-alanine, which is then accepted by the first adenylation domain of ungA', whereas the methyltransferase ungE' provides the (2R,3R)-beta-methylphenylalanine residue incorporated by the module 4. Finally, the hydrolase ungD' catalyzes the hydrolysis between the D-tryptophan and GABA residues of unguisins H and I to produce the corresponding linear peptides. This chain is Nonribosomal peptide synthetase ungA', found in Aspergillus campestris (strain IBT 28561).